The following is a 401-amino-acid chain: Lipid-A-disaccharide synthase (401 aa).

Belongs to the LpxB family.

It catalyses the reaction a lipid X + a UDP-2-N,3-O-bis[(3R)-3-hydroxyacyl]-alpha-D-glucosamine = a lipid A disaccharide + UDP + H(+). It participates in bacterial outer membrane biogenesis; LPS lipid A biosynthesis. Condensation of UDP-2,3-diacylglucosamine and 2,3-diacylglucosamine-1-phosphate to form lipid A disaccharide, a precursor of lipid A, a phosphorylated glycolipid that anchors the lipopolysaccharide to the outer membrane of the cell. This is Lipid-A-disaccharide synthase from Ruegeria pomeroyi (strain ATCC 700808 / DSM 15171 / DSS-3) (Silicibacter pomeroyi).